Reading from the N-terminus, the 167-residue chain is Probable D-lyxose ketol-isomerase (167 aa).

Histidine 69, histidine 71, glutamate 82, and histidine 137 together coordinate Mn(2+).

This sequence belongs to the D-lyxose ketol-isomerase family. In terms of assembly, homodimer. It depends on Mn(2+) as a cofactor.

It carries out the reaction D-lyxose = D-xylulose. In terms of biological role, sugar isomerase that catalyzes the reversible isomerization of D-lyxose to D-xylulose. This Bacillus subtilis (strain 168) protein is Probable D-lyxose ketol-isomerase (ydaE).